Consider the following 419-residue polypeptide: Glutamate dehydrogenase (419 aa).

Lys105 is an active-site residue. 219-225 (GYGNAGY) serves as a coordination point for NAD(+).

It belongs to the Glu/Leu/Phe/Val dehydrogenases family. In terms of assembly, homohexamer.

It carries out the reaction L-glutamate + NAD(+) + H2O = 2-oxoglutarate + NH4(+) + NADH + H(+). The catalysed reaction is L-glutamate + NADP(+) + H2O = 2-oxoglutarate + NH4(+) + NADPH + H(+). The chain is Glutamate dehydrogenase (gdhA) from Thermococcus profundus.